The chain runs to 588 residues: Adenine deaminase (588 aa).

Belongs to the metallo-dependent hydrolases superfamily. Adenine deaminase family. As to quaternary structure, homodimer. Mn(2+) serves as cofactor.

The enzyme catalyses adenine + H2O + H(+) = hypoxanthine + NH4(+). The protein is Adenine deaminase of Escherichia coli O7:K1 (strain IAI39 / ExPEC).